A 200-amino-acid polypeptide reads, in one-letter code: Ribosome maturation factor RimP (200 aa).

This sequence belongs to the RimP family.

It is found in the cytoplasm. Its function is as follows. Required for maturation of 30S ribosomal subunits. This chain is Ribosome maturation factor RimP, found in Polaromonas sp. (strain JS666 / ATCC BAA-500).